Reading from the N-terminus, the 330-residue chain is MENNNQSFWQFSDQLRLQASNLANLSLNDSIWSNNYISKRRDERINFDIKVGGEINSFKSKDPACDYNDNVNGSLLAMPYNNNNNNNIILGFGGVGLNGGFNKGIYSKPAFANLNNNINLNINPKGHKGKVEDELFHPSKSSKKNNNLNKKHGDNNNNDNNKDSKAAGDKRFKTLPPSESLPRDETIGGYIFVCNNDTMAENLKRQLFGLPPRYRDSVRAITPGLPLFLYNYSTHQLHGIFEAASFGGTNIDPSAWEDKKCPGESRFPAQVRVITRKTCEPLEEDSFRPILHHYDGPKFRLELNVPEALSLLDIFAEQDTFNDAFEALPA.

The interval 137-181 (HPSKSSKKNNNLNKKHGDNNNNDNNKDSKAAGDKRFKTLPPSESL) is disordered. Basic and acidic residues predominate over residues 160–172 (NNKDSKAAGDKRF). In terms of domain architecture, DCD spans 185–317 (ETIGGYIFVC…ALSLLDIFAE (133 aa)).

It localises to the cytoplasm. Functionally, involved in stress signaling pathway that mediates cell death in response to endoplasmic reticulum (ER) stress and osmotic stress. In Glycine max (Soybean), this protein is DCD domain-containing protein NRP-B.